A 427-amino-acid chain; its full sequence is Enolase (427 aa).

A (2R)-2-phosphoglycerate-binding site is contributed by Gln163. Glu205 serves as the catalytic Proton donor. Asp242, Glu285, and Asp312 together coordinate Mg(2+). Lys337, Arg366, Ser367, and Lys388 together coordinate (2R)-2-phosphoglycerate. Lys337 functions as the Proton acceptor in the catalytic mechanism.

It belongs to the enolase family. Mg(2+) is required as a cofactor.

The protein localises to the cytoplasm. It is found in the secreted. Its subcellular location is the cell surface. It catalyses the reaction (2R)-2-phosphoglycerate = phosphoenolpyruvate + H2O. Its pathway is carbohydrate degradation; glycolysis; pyruvate from D-glyceraldehyde 3-phosphate: step 4/5. Its function is as follows. Catalyzes the reversible conversion of 2-phosphoglycerate (2-PG) into phosphoenolpyruvate (PEP). It is essential for the degradation of carbohydrates via glycolysis. This is Enolase from Polaromonas sp. (strain JS666 / ATCC BAA-500).